Here is a 291-residue protein sequence, read N- to C-terminus: Diaminopimelate epimerase (291 aa).

Positions 13, 46, and 66 each coordinate substrate. The active-site Proton donor is the Cys75. Residues 76–77 (GN), Asn170, Asn203, and 221–222 (ER) each bind substrate. Cys230 serves as the catalytic Proton acceptor. 231 to 232 (GS) is a substrate binding site.

The protein belongs to the diaminopimelate epimerase family. As to quaternary structure, homodimer.

Its subcellular location is the cytoplasm. It carries out the reaction (2S,6S)-2,6-diaminopimelate = meso-2,6-diaminopimelate. The protein operates within amino-acid biosynthesis; L-lysine biosynthesis via DAP pathway; DL-2,6-diaminopimelate from LL-2,6-diaminopimelate: step 1/1. Its function is as follows. Catalyzes the stereoinversion of LL-2,6-diaminopimelate (L,L-DAP) to meso-diaminopimelate (meso-DAP), a precursor of L-lysine and an essential component of the bacterial peptidoglycan. This chain is Diaminopimelate epimerase, found in Albidiferax ferrireducens (strain ATCC BAA-621 / DSM 15236 / T118) (Rhodoferax ferrireducens).